We begin with the raw amino-acid sequence, 742 residues long: Transcription factor FFUJ_09177 (742 aa).

The zn(2)-C6 fungal-type DNA-binding region spans 15-41 (CVSCARSKQRCDGHSPCGRCSLKNLDC). Disordered stretches follow at residues 50-80 (GQNS…VQSQ) and 218-244 (HSLD…SVRD). The segment covering 218-240 (HSLDISSYQGQSNQTSPETTSHS) has biased composition (polar residues).

It is found in the nucleus. Transcription factor; part of the DMATS1 gene cluster that mediates the biosynthesis of a reversely N-prenylated monomeric L-tryptophan (r-N-DMAT). Seems not to regulate the expression of the DMATS1 cluster. The protein is Transcription factor FFUJ_09177 of Gibberella fujikuroi (strain CBS 195.34 / IMI 58289 / NRRL A-6831) (Bakanae and foot rot disease fungus).